The primary structure comprises 165 residues: NADPH-dependent 7-cyano-7-deazaguanine reductase (165 aa).

Cys-56 functions as the Thioimide intermediate in the catalytic mechanism. Asp-63 serves as the catalytic Proton donor. Residues 78–80 (VES) and 97–98 (HE) each bind substrate.

Belongs to the GTP cyclohydrolase I family. QueF type 1 subfamily.

The protein resides in the cytoplasm. It catalyses the reaction 7-aminomethyl-7-carbaguanine + 2 NADP(+) = 7-cyano-7-deazaguanine + 2 NADPH + 3 H(+). It functions in the pathway tRNA modification; tRNA-queuosine biosynthesis. Functionally, catalyzes the NADPH-dependent reduction of 7-cyano-7-deazaguanine (preQ0) to 7-aminomethyl-7-deazaguanine (preQ1). This Bacillus thuringiensis subsp. konkukian (strain 97-27) protein is NADPH-dependent 7-cyano-7-deazaguanine reductase.